A 433-amino-acid polypeptide reads, in one-letter code: Meiotically up-regulated gene 131 protein (433 aa).

The span at 401 to 412 (LSSQGREISNTL) shows a compositional bias: polar residues. A disordered region spans residues 401-433 (LSSQGREISNTLSRKRGAKGSNPFEIENMMPHA).

It belongs to the UPF0300 family.

Its subcellular location is the golgi apparatus. Has a role in meiosis. The sequence is that of Meiotically up-regulated gene 131 protein (mug131) from Schizosaccharomyces pombe (strain 972 / ATCC 24843) (Fission yeast).